The chain runs to 201 residues: Small ribosomal subunit protein uS4 (201 aa).

The 61-residue stretch at 91 to 151 folds into the S4 RNA-binding domain; the sequence is SRLDNVVYRA…EKSRKMVWFD (61 aa).

Belongs to the universal ribosomal protein uS4 family. As to quaternary structure, part of the 30S ribosomal subunit. Contacts protein S5. The interaction surface between S4 and S5 is involved in control of translational fidelity.

In terms of biological role, one of the primary rRNA binding proteins, it binds directly to 16S rRNA where it nucleates assembly of the body of the 30S subunit. Functionally, with S5 and S12 plays an important role in translational accuracy. This Corynebacterium kroppenstedtii (strain DSM 44385 / JCM 11950 / CIP 105744 / CCUG 35717) protein is Small ribosomal subunit protein uS4.